The chain runs to 250 residues: 26 kDa periplasmic immunogenic protein (250 aa).

The N-terminal stretch at 1–28 is a signal peptide; that stretch reads MNTRASNFLAASFSTIMLVGAFSLPAFA.

It localises to the periplasm. In Brucella abortus (strain S19), this protein is 26 kDa periplasmic immunogenic protein (bp26).